The chain runs to 448 residues: Alpha-2B adrenergic receptor (448 aa).

The Extracellular segment spans residues 1 to 12 (MDHQEPYSVQAT). Residues 13–38 (AAIAAVITFLILFTIFGNALVILAVL) traverse the membrane as a helical segment. Topologically, residues 39–49 (TSRSLPAPQNL) are cytoplasmic. Residues 50-75 (FLVSLAAADILVATLIIPFSLANELL) traverse the membrane as a helical segment. The Extracellular segment spans residues 76–85 (GYWYFWRTWC). Cysteines 85 and 163 form a disulfide. A helical transmembrane segment spans residues 86–108 (EVYLALDVLFCTSSIVHLCAISL). Residues 109 to 130 (DRYWAVSRALEYNSKRTPRRIK) lie on the Cytoplasmic side of the membrane. Residues 131–153 (CIILTVWLIAAVISLPPLIYKGD) traverse the membrane as a helical segment. The Extracellular segment spans residues 154-168 (QGPSPRGPQCKINQE). The helical transmembrane segment at 169–192 (AWYILASSIGSFFAPCLIMILVYL) threads the bilayer. The Cytoplasmic portion of the chain corresponds to 193-370 (RIYLIAKRSH…MTREKRFTFV (178 aa)). Positions 203 to 326 (RRGPRAKGGP…PASMCSPSLQ (124 aa)) are disordered. Residues 293–309 (AEEEAEEEEEEEGDECE) show a composition bias toward acidic residues. The chain crosses the membrane as a helical span at residues 371–394 (LAVVIGVFVLCWFPFFFTYSLGAI). The Extracellular portion of the chain corresponds to 395–403 (CPQHCKVPH). Residues 404–427 (GLFQFFFWIGYCNSSLNPVIYTIF) traverse the membrane as a helical segment. Residues 428 to 448 (NQDFRRAFRRILCRQWTQTAW) lie on the Cytoplasmic side of the membrane. C440 carries S-palmitoyl cysteine lipidation.

It belongs to the G-protein coupled receptor 1 family. Adrenergic receptor subfamily. ADRA2B sub-subfamily. Interacts with RAB26. Interacts with PPP1R9B.

It is found in the cell membrane. In terms of biological role, alpha-2 adrenergic receptors mediate the catecholamine-induced inhibition of adenylate cyclase through the action of G proteins. This is Alpha-2B adrenergic receptor (ADRA2B) from Cavia porcellus (Guinea pig).